A 364-amino-acid chain; its full sequence is Putative zinc metalloprotease all3971 (364 aa).

Residue His-17 participates in Zn(2+) binding. Residue Glu-18 is part of the active site. Position 21 (His-21) interacts with Zn(2+). 3 helical membrane passes run 92 to 114 (AIVI…LAQV), 281 to 303 (LFFF…LPAL), and 329 to 346 (VMQT…FLIV). Residues 103 to 188 (LIFAYMLLLA…KSIQLTVARG (86 aa)) enclose the PDZ domain.

This sequence belongs to the peptidase M50B family. Zn(2+) serves as cofactor.

The protein resides in the cell inner membrane. This chain is Putative zinc metalloprotease all3971, found in Nostoc sp. (strain PCC 7120 / SAG 25.82 / UTEX 2576).